The sequence spans 523 residues: GMP synthase [glutamine-hydrolyzing] (523 aa).

In terms of domain architecture, Glutamine amidotransferase type-1 spans 8 to 205 (KILILDFGSQ…VVNICGCETK (198 aa)). The Nucleophile role is filled by Cys-85. Residues His-179 and Glu-181 contribute to the active site. One can recognise a GMPS ATP-PPase domain in the interval 206–398 (WTAENIIEDA…LGLPAEMINR (193 aa)). 233 to 239 (SGGVDSS) is an ATP binding site.

Homodimer.

It carries out the reaction XMP + L-glutamine + ATP + H2O = GMP + L-glutamate + AMP + diphosphate + 2 H(+). It participates in purine metabolism; GMP biosynthesis; GMP from XMP (L-Gln route): step 1/1. In terms of biological role, catalyzes the synthesis of GMP from XMP. The sequence is that of GMP synthase [glutamine-hydrolyzing] from Haemophilus influenzae (strain 86-028NP).